The chain runs to 449 residues: MPKNKKRNAPHRGGGGGGGSGAATSAATTGGPHRTVQPFSDEDASIETMSHCSGYSDPSSFAEDGPEVLDEEGTQEDLEYKLKGLIDLTLDKSAKTRQAALEGVKNALSSKVLYEFVLERRMTLTDSIERCLKKGKSDGQRAAAALASVLCIQLGPGLESEEILKTLGPILKKIICDGTASIQARQTCATCFGVCCFIATDDITELYSTLECLEGIFTKSYLKEKDTNVPCSTPNTVLHISSLLAWTLLLTICPISEVKKKLELHFHKLPSLLSCDDVNMRIAAGESLALLFELARGMESDFFYEDMDSLTQMLRALATDGNKHRAKVDKRKQRSVFRDVLRAVEERDFPTETVKFGPERMYIDSWVKKHTYDTFKEALGSGMQYHLQTNEFLRNVFELGPPVMLDAATLKTMKIPRFERHLYNSAAFKARTKARSKCRDKRADVGEFF.

A compositionally biased stretch (basic residues) spans 1 to 10 (MPKNKKRNAP). The interval 1 to 41 (MPKNKKRNAPHRGGGGGGGSGAATSAATTGGPHRTVQPFSD) is disordered. Positions 12–21 (RGGGGGGGSG) are enriched in gly residues. Residues 22 to 31 (AATSAATTGG) show a composition bias toward low complexity.

The protein belongs to the IFRD family. Interacts with PSIP1/LEDGF. Expressed at high levels in the embryonic brain in the period related to neuroblast proliferation and differentiation.

The protein resides in the cytoplasm. It localises to the cell membrane. The protein localises to the nucleus. In terms of biological role, probably participates in neurogenesis. Could play a role in regulating gene activity in the proliferative and/or differentiative pathways induced by NGF. This chain is Interferon-related developmental regulator 1 (Ifrd1), found in Rattus norvegicus (Rat).